Consider the following 63-residue polypeptide: Conotoxin Cl14.11 (63 aa).

The N-terminal stretch at 1–21 (MRFLLLLTVALLLTCIMETDA) is a signal peptide. Positions 22 to 34 (EAKPEDLAERFRE) are excised as a propeptide.

Post-translationally, contains 2 disulfide bond. Expressed by the venom duct.

Its subcellular location is the secreted. The sequence is that of Conotoxin Cl14.11 from Californiconus californicus (California cone).